Consider the following 325-residue polypeptide: MKTLCSFLQISRNMHQENQTTITEFILLGLSNQAEHQNLLFVLFLSMYVVTVVGNGLIIVAISLDIYLHTPMYLFLAYLSFADISSISNSVPKMLVNIQTNSQSISYESCITQMYFSIVFVVTDNLLLGTMAFDHFVAICHPLNYTTFMRARFGTLLTVISWFLSNIIALTHTLLLIQLLFCDHNTLPHFFCDLAPLLKLSCSDTMINELVLFIVGLSVIIFPFVLIFFSYVCIIRAVLGVSSTQGKWKAFSTCGSHLTIALLFYGTTVGVYFFPSSTHPEDTDKIGAVLFTVVTPMMNPFIYSLRNKDMKGALRKLINRKISSL.

At 1–38 (MKTLCSFLQISRNMHQENQTTITEFILLGLSNQAEHQN) the chain is on the extracellular side. Asn18 carries an N-linked (GlcNAc...) asparagine glycan. A helical transmembrane segment spans residues 39-62 (LLFVLFLSMYVVTVVGNGLIIVAI). At 63 to 70 (SLDIYLHT) the chain is on the cytoplasmic side. The helical transmembrane segment at 71–92 (PMYLFLAYLSFADISSISNSVP) threads the bilayer. Topologically, residues 93–113 (KMLVNIQTNSQSISYESCITQ) are extracellular. A disulfide bridge connects residues Cys110 and Cys202. A helical transmembrane segment spans residues 114–133 (MYFSIVFVVTDNLLLGTMAF). The Cytoplasmic segment spans residues 134 to 152 (DHFVAICHPLNYTTFMRAR). The chain crosses the membrane as a helical span at residues 153–171 (FGTLLTVISWFLSNIIALT). Over 172–208 (HTLLLIQLLFCDHNTLPHFFCDLAPLLKLSCSDTMIN) the chain is Extracellular. A helical membrane pass occupies residues 209–232 (ELVLFIVGLSVIIFPFVLIFFSYV). Over 233 to 249 (CIIRAVLGVSSTQGKWK) the chain is Cytoplasmic. A helical transmembrane segment spans residues 250–272 (AFSTCGSHLTIALLFYGTTVGVY). The Extracellular segment spans residues 273–285 (FFPSSTHPEDTDK). A helical membrane pass occupies residues 286 to 305 (IGAVLFTVVTPMMNPFIYSL). At 306 to 325 (RNKDMKGALRKLINRKISSL) the chain is on the cytoplasmic side.

The protein belongs to the G-protein coupled receptor 1 family.

It localises to the cell membrane. In terms of biological role, odorant receptor. This Homo sapiens (Human) protein is Olfactory receptor 1S2 (OR1S2).